We begin with the raw amino-acid sequence, 214 residues long: Ion-translocating oxidoreductase complex subunit G (214 aa).

The chain crosses the membrane as a helical span at residues 13–33 (ALLLGLFALVGVGLVALVQQF). T180 is modified (FMN phosphoryl threonine).

The protein belongs to the RnfG family. In terms of assembly, the complex is composed of six subunits: RnfA, RnfB, RnfC, RnfD, RnfE and RnfG. FMN is required as a cofactor.

Its subcellular location is the cell inner membrane. In terms of biological role, part of a membrane-bound complex that couples electron transfer with translocation of ions across the membrane. This Pseudomonas aeruginosa (strain UCBPP-PA14) protein is Ion-translocating oxidoreductase complex subunit G.